The primary structure comprises 199 residues: Charged multivesicular body protein 1b (199 aa).

Positions 26 to 48 (DKEEKAEKAKIKKAIQKGNMEVA) form a coiled coil. The interaction with IST1 stretch occupies residues 132–156 (MEDTMSSTTTLTTPQGQVDMLLQEM). A disordered region spans residues 167-199 (ELPQGQTGSVGTSVASAEQDELSQRLARLRDQV). Polar residues predominate over residues 170–182 (QGQTGSVGTSVAS). Positions 174–199 (GSVGTSVASAEQDELSQRLARLRDQV) are interaction with SPAST. Residues 178 to 199 (TSVASAEQDELSQRLARLRDQV) are a coiled coil. An interaction with VPS4A, MITD1 and STAMBP region spans residues 180 to 196 (VASAEQDELSQRLARLR). An interaction with VTA1 region spans residues 180-199 (VASAEQDELSQRLARLRDQV). The interval 183–199 (AEQDELSQRLARLRDQV) is interaction with VPS4B. The short motif at 186–196 (DELSQRLARLR) is the MIT-interacting motif element.

Belongs to the SNF7 family. As to quaternary structure, probable peripherally associated component of the endosomal sorting required for transport complex III (ESCRT-III). ESCRT-III components are thought to multimerize to form a flat lattice on the perimeter membrane of the endosome. Several assembly forms of ESCRT-III may exist that interact and act sequentially. Interacts with CHMP1A. Interacts with VTA1; the interaction probably involves the open conformation of CHMP1B. Interacts with CHMP2A. Interacts with VPS4A; the interaction is direct. Interacts with VPS4B; the interaction is direct. Interacts with SPAST (via MIT domain); the interaction is direct. Interacts with IST1. Interacts with MITD1. Interacts with STAMBP.

It localises to the cytoplasm. Its subcellular location is the cytosol. It is found in the endosome. The protein resides in the late endosome membrane. In terms of biological role, probable peripherally associated component of the endosomal sorting required for transport complex III (ESCRT-III) which is involved in multivesicular bodies (MVBs) formation and sorting of endosomal cargo proteins into MVBs. MVBs contain intraluminal vesicles (ILVs) that are generated by invagination and scission from the limiting membrane of the endosome and mostly are delivered to lysosomes enabling degradation of membrane proteins, such as stimulated growth factor receptors, lysosomal enzymes and lipids. The MVB pathway appears to require the sequential function of ESCRT-O, -I,-II and -III complexes. ESCRT-III proteins mostly dissociate from the invaginating membrane before the ILV is released. The ESCRT machinery also functions in topologically equivalent membrane fission events, such as the terminal stages of cytokinesis and the budding of enveloped viruses (lentiviruses). ESCRT-III proteins are believed to mediate the necessary vesicle extrusion and/or membrane fission activities, possibly in conjunction with the AAA ATPase VPS4. Involved in cytokinesis. Involved in recruiting VPS4A and/or VPS4B and SPAST to the midbody of dividing cells. This Bos taurus (Bovine) protein is Charged multivesicular body protein 1b (CHMP1B).